Consider the following 284-residue polypeptide: Avenin-like b11 (284 aa).

The signal sequence occupies residues 1-18 (MKVFILALLALTATTAIA).

Belongs to the prolamin family. In terms of processing, contains disulfide bonds.

In terms of biological role, seed storage protein. Might be integrated via inter-chain disulfide bonds within the glutenin polymer. This is Avenin-like b11 from Triticum aestivum (Wheat).